The sequence spans 572 residues: Proline--tRNA ligase (572 aa).

The protein belongs to the class-II aminoacyl-tRNA synthetase family. ProS type 1 subfamily. Homodimer.

Its subcellular location is the cytoplasm. It catalyses the reaction tRNA(Pro) + L-proline + ATP = L-prolyl-tRNA(Pro) + AMP + diphosphate. Its function is as follows. Catalyzes the attachment of proline to tRNA(Pro) in a two-step reaction: proline is first activated by ATP to form Pro-AMP and then transferred to the acceptor end of tRNA(Pro). As ProRS can inadvertently accommodate and process non-cognate amino acids such as alanine and cysteine, to avoid such errors it has two additional distinct editing activities against alanine. One activity is designated as 'pretransfer' editing and involves the tRNA(Pro)-independent hydrolysis of activated Ala-AMP. The other activity is designated 'posttransfer' editing and involves deacylation of mischarged Ala-tRNA(Pro). The misacylated Cys-tRNA(Pro) is not edited by ProRS. The chain is Proline--tRNA ligase from Psychrobacter arcticus (strain DSM 17307 / VKM B-2377 / 273-4).